A 94-amino-acid polypeptide reads, in one-letter code: C-C motif chemokine 26 (94 aa).

The signal sequence occupies residues 1–23; sequence MMGLSLASAVLLASLLSLHLGTA. Cystine bridges form between cysteine 33–cysteine 57 and cysteine 34–cysteine 73.

It belongs to the intercrine beta (chemokine CC) family. Monomer. Ubiquitously expressed at low levels in various tissues including heart and ovary.

The protein localises to the secreted. Its function is as follows. Chemoattractant for eosinophils and basophils. Acts as a ligand for C-C chemokine receptor CCR3 which triggers Ca(2+) mobilization in eosinophils. Also acts as a ligand for CX3C chemokine receptor CX3CR1, inducing cell chemotaxis. This chain is C-C motif chemokine 26, found in Homo sapiens (Human).